The sequence spans 122 residues: Prefoldin subunit 1 (122 aa).

N-acetylalanine is present on Ala-2.

This sequence belongs to the prefoldin subunit beta family. As to quaternary structure, heterohexamer of two PFD-alpha type and four PFD-beta type subunits.

Functionally, binds specifically to cytosolic chaperonin (c-CPN) and transfers target proteins to it. Binds to nascent polypeptide chain and promotes folding in an environment in which there are many competing pathways for nonnative proteins. This Bos taurus (Bovine) protein is Prefoldin subunit 1 (PFDN1).